We begin with the raw amino-acid sequence, 138 residues long: Small ribosomal subunit protein uS11c (138 aa).

A disordered region spans residues 1-23; sequence MAKPILRIGSRKNTRSGSRKNVR. Residues 9-23 are compositionally biased toward basic residues; that stretch reads GSRKNTRSGSRKNVR.

The protein belongs to the universal ribosomal protein uS11 family. As to quaternary structure, part of the 30S ribosomal subunit.

The protein localises to the plastid. Its subcellular location is the chloroplast. The sequence is that of Small ribosomal subunit protein uS11c from Crucihimalaya wallichii (Rock-cress).